We begin with the raw amino-acid sequence, 68 residues long: Erythrodihydroneopterin triphosphate synthetase (68 aa).

Residue Ser-66 is modified to Phosphoserine.

This is Erythrodihydroneopterin triphosphate synthetase from Cavia porcellus (Guinea pig).